The sequence spans 124 residues: Fluoride-specific ion channel FluC (124 aa).

4 helical membrane passes run 6-26 (LLIG…SGIV), 37-57 (LAVN…SLFA), 69-89 (TGFC…FVLV), and 92-112 (GLLF…LIMV). Na(+) contacts are provided by G73 and T76.

It belongs to the fluoride channel Fluc/FEX (TC 1.A.43) family.

It is found in the cell membrane. The catalysed reaction is fluoride(in) = fluoride(out). Na(+) is not transported, but it plays an essential structural role and its presence is essential for fluoride channel function. Its function is as follows. Fluoride-specific ion channel. Important for reducing fluoride concentration in the cell, thus reducing its toxicity. The chain is Fluoride-specific ion channel FluC from Methanocaldococcus jannaschii (strain ATCC 43067 / DSM 2661 / JAL-1 / JCM 10045 / NBRC 100440) (Methanococcus jannaschii).